The chain runs to 366 residues: 5-hydroxytryptamine receptor 1F (366 aa).

The Extracellular segment spans residues 1-24 (MDFLNSSDQNLTSEELLNRMPSKI). Asn-5 and Asn-10 each carry an N-linked (GlcNAc...) asparagine glycan. A helical membrane pass occupies residues 25–49 (LVSLTLSGLALMTTTINCLVITAII). The Cytoplasmic segment spans residues 50 to 59 (VTRKLHHPAN). A helical membrane pass occupies residues 60 to 81 (YLICSLAVTDFLVAVLVMPFSI). The Extracellular portion of the chain corresponds to 82 to 96 (VYIVRESWIMGQGLC). Cys-96 and Cys-172 are oxidised to a cystine. A helical transmembrane segment spans residues 97–119 (DLWLSVDIICCTCSILHLSAIAL). Asp-103 and Cys-107 together coordinate serotonin. Residues 120-122 (DRY) carry the DRY motif; important for ligand-induced conformation changes motif. The Cytoplasmic segment spans residues 120-139 (DRYRAITDAVEYARKRTPRH). Residues 140–159 (AGITITTVWVISVFISVPPL) form a helical membrane-spanning segment. The Extracellular portion of the chain corresponds to 160-178 (FWRHQGNSRDDQCIIKHDH). Residues 179–202 (IVSTIYSTFGAFYIPLVLILILYY) traverse the membrane as a helical segment. Over 203-291 (KIYRAARTLY…KISGTRERKA (89 aa)) the chain is Cytoplasmic. A helical transmembrane segment spans residues 292 to 315 (ATTLGLILGAFVICWLPFFVKELV). At 316–327 (VNICEKCKISEE) the chain is on the extracellular side. The chain crosses the membrane as a helical span at residues 328–350 (MSNFLAWLGYLNSLINPLIYTIF). Positions 343–347 (NPLIY) match the NPxxY motif; important for ligand-induced conformation changes and signaling motif. Over 351–366 (NEDFKKAFQKLVRCRN) the chain is Cytoplasmic.

The protein belongs to the G-protein coupled receptor 1 family.

Its subcellular location is the cell membrane. Its function is as follows. G-protein coupled receptor for 5-hydroxytryptamine (serotonin). Also functions as a receptor for various alkaloids and psychoactive substances. Ligand binding causes a conformation change that triggers signaling via guanine nucleotide-binding proteins (G proteins) and modulates the activity of downstream effectors, such as adenylate cyclase. HTR1F is coupled to G(i)/G(o) G alpha proteins and mediates inhibitory neurotransmission by inhibiting adenylate cyclase activity. In Rattus norvegicus (Rat), this protein is 5-hydroxytryptamine receptor 1F (Htr1f).